The chain runs to 645 residues: 1,4-alpha-glucan branching enzyme GlgB (645 aa).

The Nucleophile role is filled by aspartate 309. Catalysis depends on glutamate 352, which acts as the Proton donor. Residues 619–645 (VKTRKGSKKQDGSKTKVRSNVTSRGKR) are disordered. Over residues 636 to 645 (RSNVTSRGKR) the composition is skewed to polar residues.

Belongs to the glycosyl hydrolase 13 family. GlgB subfamily. As to quaternary structure, monomer.

The catalysed reaction is Transfers a segment of a (1-&gt;4)-alpha-D-glucan chain to a primary hydroxy group in a similar glucan chain.. The protein operates within glycan biosynthesis; glycogen biosynthesis. Its function is as follows. Catalyzes the formation of the alpha-1,6-glucosidic linkages in glycogen by scission of a 1,4-alpha-linked oligosaccharide from growing alpha-1,4-glucan chains and the subsequent attachment of the oligosaccharide to the alpha-1,6 position. This is 1,4-alpha-glucan branching enzyme GlgB from Bacillus cereus (strain 03BB102).